The following is a 196-amino-acid chain: Imidazole glycerol phosphate synthase subunit HisH (196 aa).

The Glutamine amidotransferase type-1 domain maps to aspartate 2–methionine 196. Cysteine 77 serves as the catalytic Nucleophile. Active-site residues include histidine 178 and glutamate 180.

In terms of assembly, heterodimer of HisH and HisF.

The protein localises to the cytoplasm. It catalyses the reaction 5-[(5-phospho-1-deoxy-D-ribulos-1-ylimino)methylamino]-1-(5-phospho-beta-D-ribosyl)imidazole-4-carboxamide + L-glutamine = D-erythro-1-(imidazol-4-yl)glycerol 3-phosphate + 5-amino-1-(5-phospho-beta-D-ribosyl)imidazole-4-carboxamide + L-glutamate + H(+). The catalysed reaction is L-glutamine + H2O = L-glutamate + NH4(+). The protein operates within amino-acid biosynthesis; L-histidine biosynthesis; L-histidine from 5-phospho-alpha-D-ribose 1-diphosphate: step 5/9. Functionally, IGPS catalyzes the conversion of PRFAR and glutamine to IGP, AICAR and glutamate. The HisH subunit catalyzes the hydrolysis of glutamine to glutamate and ammonia as part of the synthesis of IGP and AICAR. The resulting ammonia molecule is channeled to the active site of HisF. The sequence is that of Imidazole glycerol phosphate synthase subunit HisH from Yersinia pestis.